Reading from the N-terminus, the 620-residue chain is MTIKSMTEYETISYKTFLDIFSPLPEIGEILEESESVEEAREKLFEFCKELEWEIRMGRIKFDNEVDRWLALKAIEVFLNIISKDNERLAGFSTLEYLWKAYKGDEEALKEIREGFIEEFRHLFLAMSGKADYSLGFLGKRLLEEGVKFIDFSKIKGREAGIARSNFLDKVYEIMREYISRYPSGLDKRIILKRKKNREILEEFFGITDEEWFNYKWQFKNVLRGLKGVKILRELREVTNFKISDEDLEIIEKAVKNGIPFGLTPYYLHLFDFENPYVEDLAVRRQVIPPEWYVEKMIEHKEDRNIAFDFMGEHDTSPIDLVTRRYVTIAIIKPYESCPQICVYCQRNWMVQDFDAKAFPGWEKVEKALDWFAEHDSMIEILITGGDPFSLSDKAIEKMLNRIAEMNHVVGVRFGTRTIVTAPMRITDELAELLGSFEKSLMISTHVESCYEITPEVAEAVKKLRTNNIYIYNQHVFHRYVSRRFENVALRIALKKVGIIPYYTFYPKGKMEHKDYLVPIARLAQEVKEEARLLPGSFRTDEPIFNVPRMGKNHLRAWQDRELIAIKPNGSRVYLMHPWEKGIYPTKLYTYEDVPIKEYLDSLKEIGENIEEYKTIWYYY.

Residues 324–586 (RRYVTIAIIK…HPWEKGIYPT (263 aa)) enclose the Radical SAM core domain. [4Fe-4S] cluster-binding residues include cysteine 338, cysteine 342, and cysteine 345. Position 552 is an N6-(pyridoxal phosphate)lysine (lysine 552).

This sequence belongs to the radical SAM superfamily. KamA family. The cofactor is [4Fe-4S] cluster. Pyridoxal 5'-phosphate serves as cofactor.

This is an uncharacterized protein from Methanocaldococcus jannaschii (strain ATCC 43067 / DSM 2661 / JAL-1 / JCM 10045 / NBRC 100440) (Methanococcus jannaschii).